Here is a 142-residue protein sequence, read N- to C-terminus: MVLSPADKTNIKSTWDKIGGHAGDYGGEALDRTFQSFPTTKTYFPHFDLSPGSAQVKAHGKKVADALTTAVAHLDDLPGALSALSDLHAYKLRVDPVNFKLLSHCLLVTLACHHPTEFTPAVHASLDKFFTAVSTVLTSKYR.

The region spanning 2 to 142 (VLSPADKTNI…VSTVLTSKYR (141 aa)) is the Globin domain. Position 4 is a phosphoserine (S4). K8 bears the N6-succinyllysine mark. A Phosphothreonine modification is found at T9. Residue K12 is modified to N6-succinyllysine. At K17 the chain carries N6-acetyllysine; alternate. N6-succinyllysine; alternate is present on K17. Y25 bears the Phosphotyrosine mark. The residue at position 36 (S36) is a Phosphoserine. Residue K41 is modified to N6-succinyllysine. At S50 the chain carries Phosphoserine. H59 serves as a coordination point for O2. H88 is a binding site for heme b. S103 carries the phosphoserine modification. At T109 the chain carries Phosphothreonine. The residue at position 125 (S125) is a Phosphoserine. Phosphothreonine is present on residues T135 and T138. The residue at position 139 (S139) is a Phosphoserine.

Belongs to the globin family. As to quaternary structure, heterotetramer of two alpha chains and two beta chains. Red blood cells.

Involved in oxygen transport from the lung to the various peripheral tissues. Functionally, hemopressin acts as an antagonist peptide of the cannabinoid receptor CNR1. Hemopressin-binding efficiently blocks cannabinoid receptor CNR1 and subsequent signaling. The protein is Hemoglobin subunit alpha (HBA) of Canis latrans (Coyote).